A 102-amino-acid polypeptide reads, in one-letter code: Small ribosomal subunit protein uS10 (102 aa).

It belongs to the universal ribosomal protein uS10 family. As to quaternary structure, part of the 30S ribosomal subunit.

In terms of biological role, involved in the binding of tRNA to the ribosomes. This Roseiflexus sp. (strain RS-1) protein is Small ribosomal subunit protein uS10.